The primary structure comprises 277 residues: Glutamate racemase (277 aa).

Substrate is bound by residues 13 to 14 and 45 to 46; these read DS and YG. Cys76 functions as the Proton donor/acceptor in the catalytic mechanism. Residue 77 to 78 participates in substrate binding; sequence NT. Catalysis depends on Cys186, which acts as the Proton donor/acceptor. 187–188 contributes to the substrate binding site; that stretch reads TH.

This sequence belongs to the aspartate/glutamate racemases family.

The enzyme catalyses L-glutamate = D-glutamate. It participates in cell wall biogenesis; peptidoglycan biosynthesis. In terms of biological role, provides the (R)-glutamate required for cell wall biosynthesis. This chain is Glutamate racemase, found in Ralstonia nicotianae (strain ATCC BAA-1114 / GMI1000) (Ralstonia solanacearum).